We begin with the raw amino-acid sequence, 334 residues long: Inositol 2-dehydrogenase (334 aa).

It belongs to the Gfo/Idh/MocA family. In terms of assembly, homotetramer.

The enzyme catalyses myo-inositol + NAD(+) = scyllo-inosose + NADH + H(+). Its function is as follows. Involved in the oxidation of myo-inositol (MI) to 2-keto-myo-inositol (2KMI or 2-inosose). This Cereibacter sphaeroides (strain ATCC 17023 / DSM 158 / JCM 6121 / CCUG 31486 / LMG 2827 / NBRC 12203 / NCIMB 8253 / ATH 2.4.1.) (Rhodobacter sphaeroides) protein is Inositol 2-dehydrogenase.